The primary structure comprises 358 residues: scyllo-inositol 2-dehydrogenase (NADP(+)) IolW (358 aa).

The protein belongs to the Gfo/Idh/MocA family.

It catalyses the reaction scyllo-inositol + NADP(+) = scyllo-inosose + NADPH + H(+). Functionally, catalyzes the reversible NADPH-dependent reduction of scyllo-inosose (SIS) to scyllo-inositol (SI). Cannot use NADH instead of NADPH. May be involved in reduction of not only SIS but also various oxidized compounds manifested upon stressful conditions. In Bacillus subtilis (strain 168), this protein is scyllo-inositol 2-dehydrogenase (NADP(+)) IolW.